We begin with the raw amino-acid sequence, 328 residues long: Probable E3 ubiquitin-protein ligase RHC1A (328 aa).

Serine 2 bears the N-acetylserine mark. The segment at 190-231 (CPVCKDEFELGSEAKQMPCNHIYHSDCIVPWLVQHNSCPVCR) adopts an RING-type; atypical zinc-finger fold. A disordered region spans residues 233-324 (ELPSASGPSS…QQSYMGYSGW (92 aa)). The segment covering 238–250 (SGPSSSQNRTTPT) has biased composition (polar residues). 2 stretches are compositionally biased toward low complexity: residues 251 to 266 (RNYRSSSSSSSSNSRE) and 275 to 290 (FSSFWPFRSSGSSSSS). The span at 291-300 (TQNRGGTRNS) shows a compositional bias: polar residues.

It catalyses the reaction S-ubiquitinyl-[E2 ubiquitin-conjugating enzyme]-L-cysteine + [acceptor protein]-L-lysine = [E2 ubiquitin-conjugating enzyme]-L-cysteine + N(6)-ubiquitinyl-[acceptor protein]-L-lysine.. Its pathway is protein modification; protein ubiquitination. Its function is as follows. Probable E3 ubiquitin-protein ligase that may possess E3 ubiquitin ligase activity in vitro. In Arabidopsis thaliana (Mouse-ear cress), this protein is Probable E3 ubiquitin-protein ligase RHC1A.